Consider the following 132-residue polypeptide: Small ribosomal subunit protein uS8 (132 aa).

The protein belongs to the universal ribosomal protein uS8 family. In terms of assembly, part of the 30S ribosomal subunit. Contacts proteins S5 and S12.

In terms of biological role, one of the primary rRNA binding proteins, it binds directly to 16S rRNA central domain where it helps coordinate assembly of the platform of the 30S subunit. This Halalkalibacterium halodurans (strain ATCC BAA-125 / DSM 18197 / FERM 7344 / JCM 9153 / C-125) (Bacillus halodurans) protein is Small ribosomal subunit protein uS8.